Consider the following 437-residue polypeptide: ATP-dependent protease ATPase subunit HslU (437 aa).

ATP-binding positions include V18, 60 to 65 (GCGKTE), D250, E315, and R387.

The protein belongs to the ClpX chaperone family. HslU subfamily. As to quaternary structure, a double ring-shaped homohexamer of HslV is capped on each side by a ring-shaped HslU homohexamer. The assembly of the HslU/HslV complex is dependent on binding of ATP.

It localises to the cytoplasm. Functionally, ATPase subunit of a proteasome-like degradation complex; this subunit has chaperone activity. The binding of ATP and its subsequent hydrolysis by HslU are essential for unfolding of protein substrates subsequently hydrolyzed by HslV. HslU recognizes the N-terminal part of its protein substrates and unfolds these before they are guided to HslV for hydrolysis. This Methylobacterium sp. (strain 4-46) protein is ATP-dependent protease ATPase subunit HslU.